The primary structure comprises 952 residues: Isoleucine--tRNA ligase (952 aa).

The 'HIGH' region motif lies at 58 to 68 (PYANGDIHIGH). Glu576 serves as a coordination point for L-isoleucyl-5'-AMP. Residues 617 to 621 (KMSKS) carry the 'KMSKS' region motif. Lys620 contributes to the ATP binding site. Positions 915, 918, 935, and 938 each coordinate Zn(2+).

It belongs to the class-I aminoacyl-tRNA synthetase family. IleS type 1 subfamily. Monomer. Zn(2+) is required as a cofactor.

It is found in the cytoplasm. The enzyme catalyses tRNA(Ile) + L-isoleucine + ATP = L-isoleucyl-tRNA(Ile) + AMP + diphosphate. In terms of biological role, catalyzes the attachment of isoleucine to tRNA(Ile). As IleRS can inadvertently accommodate and process structurally similar amino acids such as valine, to avoid such errors it has two additional distinct tRNA(Ile)-dependent editing activities. One activity is designated as 'pretransfer' editing and involves the hydrolysis of activated Val-AMP. The other activity is designated 'posttransfer' editing and involves deacylation of mischarged Val-tRNA(Ile). In Aliivibrio fischeri (strain MJ11) (Vibrio fischeri), this protein is Isoleucine--tRNA ligase.